Consider the following 341-residue polypeptide: L-threonine 3-dehydrogenase (341 aa).

A Zn(2+)-binding site is contributed by C38. Catalysis depends on charge relay system residues T40 and H43. Residues H63, E64, C93, C96, C99, and C107 each contribute to the Zn(2+) site. NAD(+) contacts are provided by residues I175, D195, R200, 262–264 (LGI), and 286–287 (IY).

It belongs to the zinc-containing alcohol dehydrogenase family. In terms of assembly, homotetramer. Zn(2+) serves as cofactor.

It localises to the cytoplasm. The catalysed reaction is L-threonine + NAD(+) = (2S)-2-amino-3-oxobutanoate + NADH + H(+). Its pathway is amino-acid degradation; L-threonine degradation via oxydo-reductase pathway; glycine from L-threonine: step 1/2. Its function is as follows. Catalyzes the NAD(+)-dependent oxidation of L-threonine to 2-amino-3-ketobutyrate. The protein is L-threonine 3-dehydrogenase of Shewanella pealeana (strain ATCC 700345 / ANG-SQ1).